Here is a 499-residue protein sequence, read N- to C-terminus: Ribose import ATP-binding protein RbsA 1 (499 aa).

2 ABC transporter domains span residues 5–240 and 249–494; these read LEMR…GRSI and TEPG…TAGS. ATP is bound at residue 37–44; that stretch reads GENGAGKS.

The protein belongs to the ABC transporter superfamily. Ribose importer (TC 3.A.1.2.1) family. As to quaternary structure, the complex is composed of an ATP-binding protein (RbsA), two transmembrane proteins (RbsC) and a solute-binding protein (RbsB).

Its subcellular location is the cell membrane. It catalyses the reaction D-ribose(out) + ATP + H2O = D-ribose(in) + ADP + phosphate + H(+). Part of the ABC transporter complex RbsABC involved in ribose import. Responsible for energy coupling to the transport system. The polypeptide is Ribose import ATP-binding protein RbsA 1 (Rubrobacter xylanophilus (strain DSM 9941 / JCM 11954 / NBRC 16129 / PRD-1)).